We begin with the raw amino-acid sequence, 449 residues long: Glycine--tRNA ligase (449 aa).

Substrate is bound by residues Arg-100 and Glu-158. ATP contacts are provided by residues 190-192 (RNE), 200-205 (FRVREF), 275-276 (EL), and 319-322 (GIER). 205 to 209 (FEQFE) provides a ligand contact to substrate. 315–319 (EPSVG) contributes to the substrate binding site.

It belongs to the class-II aminoacyl-tRNA synthetase family. As to quaternary structure, homodimer.

It localises to the cytoplasm. It catalyses the reaction tRNA(Gly) + glycine + ATP = glycyl-tRNA(Gly) + AMP + diphosphate. Catalyzes the attachment of glycine to tRNA(Gly). The polypeptide is Glycine--tRNA ligase (Mycoplasma pneumoniae (strain ATCC 29342 / M129 / Subtype 1) (Mycoplasmoides pneumoniae)).